A 200-amino-acid chain; its full sequence is Large ribosomal subunit protein uL4 (200 aa).

The disordered stretch occupies residues T42–G65.

It belongs to the universal ribosomal protein uL4 family. In terms of assembly, part of the 50S ribosomal subunit.

In terms of biological role, one of the primary rRNA binding proteins, this protein initially binds near the 5'-end of the 23S rRNA. It is important during the early stages of 50S assembly. It makes multiple contacts with different domains of the 23S rRNA in the assembled 50S subunit and ribosome. Its function is as follows. Forms part of the polypeptide exit tunnel. This Acinetobacter baumannii (strain AB307-0294) protein is Large ribosomal subunit protein uL4.